Reading from the N-terminus, the 312-residue chain is F-box protein At1g11270 (312 aa).

The F-box domain occupies 29 to 80 (SVVKLLLPHDVVGLILERLPVESLLRFKCVSNQWKSTIESQCFQERQLIRRM).

In Arabidopsis thaliana (Mouse-ear cress), this protein is F-box protein At1g11270.